The following is a 287-amino-acid chain: Protease HtpX (287 aa).

The next 2 membrane-spanning stretches (helical) occupy residues 4 to 24 (IFLLIATNLAVLLVASIVMSI) and 33 to 53 (GGLLVFAAIFGFGGAFISLAI). His-139 contacts Zn(2+). Glu-140 is a catalytic residue. His-143 lines the Zn(2+) pocket. The next 2 helical transmembrane spans lie at 154–174 (LIQGVVNTFVIFAARVVAGII) and 195–215 (AVVFVLDMLFGILASIIVAYF). Residue Glu-220 coordinates Zn(2+).

This sequence belongs to the peptidase M48B family. Zn(2+) is required as a cofactor.

It is found in the cell inner membrane. The polypeptide is Protease HtpX (Shewanella putrefaciens (strain CN-32 / ATCC BAA-453)).